Consider the following 356-residue polypeptide: S-adenosylmethionine:tRNA ribosyltransferase-isomerase (356 aa).

Belongs to the QueA family. Monomer.

The protein resides in the cytoplasm. It carries out the reaction 7-aminomethyl-7-carbaguanosine(34) in tRNA + S-adenosyl-L-methionine = epoxyqueuosine(34) in tRNA + adenine + L-methionine + 2 H(+). It functions in the pathway tRNA modification; tRNA-queuosine biosynthesis. Functionally, transfers and isomerizes the ribose moiety from AdoMet to the 7-aminomethyl group of 7-deazaguanine (preQ1-tRNA) to give epoxyqueuosine (oQ-tRNA). In Shigella boydii serotype 4 (strain Sb227), this protein is S-adenosylmethionine:tRNA ribosyltransferase-isomerase.